Reading from the N-terminus, the 193-residue chain is Peptidyl-tRNA hydrolase (193 aa).

Residue Tyr-17 participates in tRNA binding. The Proton acceptor role is filled by His-22. 3 residues coordinate tRNA: Tyr-69, Asn-71, and Asn-117.

The protein belongs to the PTH family. In terms of assembly, monomer.

The protein resides in the cytoplasm. It catalyses the reaction an N-acyl-L-alpha-aminoacyl-tRNA + H2O = an N-acyl-L-amino acid + a tRNA + H(+). Functionally, hydrolyzes ribosome-free peptidyl-tRNAs (with 1 or more amino acids incorporated), which drop off the ribosome during protein synthesis, or as a result of ribosome stalling. Catalyzes the release of premature peptidyl moieties from peptidyl-tRNA molecules trapped in stalled 50S ribosomal subunits, and thus maintains levels of free tRNAs and 50S ribosomes. This chain is Peptidyl-tRNA hydrolase, found in Leifsonia xyli subsp. xyli (strain CTCB07).